A 301-amino-acid chain; its full sequence is Cytochrome c biogenesis protein CcsA (301 aa).

Transmembrane regions (helical) follow at residues 13–33 (NNIT…GLIF), 39–59 (VFYI…IILG), 73–93 (LYES…YLEY), 97–117 (LYLI…FSTL), 146–166 (MLSY…LVLI), 209–229 (TIGF…VWAN), 236–256 (WSWD…AAYL), and 270–290 (AYLA…VNFL).

Belongs to the CcmF/CycK/Ccl1/NrfE/CcsA family. In terms of assembly, may interact with Ccs1.

Its subcellular location is the plastid. It is found in the chloroplast thylakoid membrane. Functionally, required during biogenesis of c-type cytochromes (cytochrome c6 and cytochrome f) at the step of heme attachment. This is Cytochrome c biogenesis protein CcsA from Guillardia theta (Cryptophyte).